We begin with the raw amino-acid sequence, 321 residues long: Secreted RxLR effector protein 71 (321 aa).

Residues 1–23 form the signal peptide; the sequence is MRPTGWRWPVLSLLLVLLPFQAA. The RxLR motif lies at 84 to 87; the sequence is RSLR. An N-linked (GlcNAc...) asparagine glycan is attached at N114. Residues 210–237 form a disordered region; sequence VSLGRDGNGPVRGISSSPTRLTRPRMGG.

The protein belongs to the RxLR effector family.

The protein resides in the secreted. It localises to the host cell. Functionally, secreted effector that partially suppresses the host cell death induced by cell death-inducing proteins. The polypeptide is Secreted RxLR effector protein 71 (Plasmopara viticola (Downy mildew of grapevine)).